A 336-amino-acid chain; its full sequence is Oxaloacetate decarboxylase (336 aa).

In terms of domain architecture, Pyruvate carboxyltransferase spans 10 to 258 (PIVLDTTVRD…LAAVDLDRIF (249 aa)). Mn(2+) is bound by residues aspartate 19, histidine 197, and histidine 199.

This sequence belongs to the 4-hydroxy-2-oxovalerate aldolase family. In terms of assembly, homodimer. Requires a divalent metal cation as cofactor.

The catalysed reaction is oxaloacetate + H(+) = pyruvate + CO2. Its activity is regulated as follows. Activity is abolished upon incubation with Chelex and EDTA. Its function is as follows. Exhibits oxaloacetate decarboxylase activity. Lacks any detectable aldolase activity with 4-hydroxy-2-oxopentanoate (HOPA), 4-hydroxy-2-oxohexanoate (HOHA) or other 4-hydroxy-2-oxoacids. The polypeptide is Oxaloacetate decarboxylase (Mycobacterium tuberculosis (strain ATCC 25618 / H37Rv)).